The sequence spans 874 residues: Probable inorganic carbon transporter subunit DabA (874 aa).

Positions 398, 400, 580, and 595 each coordinate Zn(2+).

The protein belongs to the inorganic carbon transporter (TC 9.A.2) DabA family. Forms a complex with DabB. Zn(2+) serves as cofactor.

It localises to the cell membrane. Its function is as follows. Part of an energy-coupled inorganic carbon pump. The protein is Probable inorganic carbon transporter subunit DabA of Bacillus cereus (strain ZK / E33L).